Here is a 374-residue protein sequence, read N- to C-terminus: Peptide chain release factor 2 (374 aa).

Glutamine 250 bears the N5-methylglutamine mark.

Belongs to the prokaryotic/mitochondrial release factor family. Post-translationally, methylated by PrmC. Methylation increases the termination efficiency of RF2.

It localises to the cytoplasm. Functionally, peptide chain release factor 2 directs the termination of translation in response to the peptide chain termination codons UGA and UAA. The sequence is that of Peptide chain release factor 2 from Roseobacter denitrificans (strain ATCC 33942 / OCh 114) (Erythrobacter sp. (strain OCh 114)).